The chain runs to 238 residues: Ribonuclease 3 (238 aa).

The region spanning 11-136 (RARLEAAIGY…LIAAIYLDGG (126 aa)) is the RNase III domain. Mg(2+) is bound at residue E49. D53 is a catalytic residue. 2 residues coordinate Mg(2+): D122 and E125. E125 is an active-site residue. Residues 161–230 (DAKTELQEWA…AMKLLEREGV (70 aa)) form the DRBM domain.

The protein belongs to the ribonuclease III family. In terms of assembly, homodimer. Mg(2+) is required as a cofactor.

The protein localises to the cytoplasm. The enzyme catalyses Endonucleolytic cleavage to 5'-phosphomonoester.. In terms of biological role, digests double-stranded RNA. Involved in the processing of primary rRNA transcript to yield the immediate precursors to the large and small rRNAs (23S and 16S). Processes some mRNAs, and tRNAs when they are encoded in the rRNA operon. Processes pre-crRNA and tracrRNA of type II CRISPR loci if present in the organism. The chain is Ribonuclease 3 from Rhizobium meliloti (strain 1021) (Ensifer meliloti).